Here is a 238-residue protein sequence, read N- to C-terminus: tRNA (guanine-N(7)-)-methyltransferase (238 aa).

Positions 68, 93, 120, and 143 each coordinate S-adenosyl-L-methionine. Residue aspartate 143 is part of the active site. Substrate is bound by residues lysine 147, aspartate 179, and 216–219 (TKFE).

The protein belongs to the class I-like SAM-binding methyltransferase superfamily. TrmB family.

It catalyses the reaction guanosine(46) in tRNA + S-adenosyl-L-methionine = N(7)-methylguanosine(46) in tRNA + S-adenosyl-L-homocysteine. The protein operates within tRNA modification; N(7)-methylguanine-tRNA biosynthesis. In terms of biological role, catalyzes the formation of N(7)-methylguanine at position 46 (m7G46) in tRNA. The protein is tRNA (guanine-N(7)-)-methyltransferase of Shewanella amazonensis (strain ATCC BAA-1098 / SB2B).